Here is a 351-residue protein sequence, read N- to C-terminus: Transmembrane protein 185-like (351 aa).

Helical transmembrane passes span leucine 16–isoleucine 36, tryptophan 41–glycine 61, phenylalanine 81–valine 101, tryptophan 113–tryptophan 133, phenylalanine 154–valine 174, isoleucine 178–leucine 198, isoleucine 212–leucine 232, and tyrosine 244–glycine 264.

It belongs to the TMEM185 family.

The protein resides in the membrane. This Danio rerio (Zebrafish) protein is Transmembrane protein 185-like.